A 150-amino-acid chain; its full sequence is Ribonuclease H (150 aa).

The RNase H type-1 domain occupies 1–141 (MKSIEVHTDG…VDVLARNQAI (141 aa)). Mg(2+)-binding residues include D9, E47, D69, and D133.

Belongs to the RNase H family. As to quaternary structure, monomer. Mg(2+) serves as cofactor.

It is found in the cytoplasm. It catalyses the reaction Endonucleolytic cleavage to 5'-phosphomonoester.. In terms of biological role, endonuclease that specifically degrades the RNA of RNA-DNA hybrids. This chain is Ribonuclease H, found in Xanthomonas axonopodis pv. citri (strain 306).